Here is a 610-residue protein sequence, read N- to C-terminus: Elongation factor 4 (610 aa).

One can recognise a tr-type G domain in the interval 11 to 193; the sequence is QRIRNFSIVA…KIVQDIPAPT (183 aa). GTP-binding positions include 23-28 and 140-143; these read DHGKST and NKVD.

The protein belongs to the TRAFAC class translation factor GTPase superfamily. Classic translation factor GTPase family. LepA subfamily.

It is found in the cell membrane. The enzyme catalyses GTP + H2O = GDP + phosphate + H(+). In terms of biological role, required for accurate and efficient protein synthesis under certain stress conditions. May act as a fidelity factor of the translation reaction, by catalyzing a one-codon backward translocation of tRNAs on improperly translocated ribosomes. Back-translocation proceeds from a post-translocation (POST) complex to a pre-translocation (PRE) complex, thus giving elongation factor G a second chance to translocate the tRNAs correctly. Binds to ribosomes in a GTP-dependent manner. In Limosilactobacillus fermentum (strain NBRC 3956 / LMG 18251) (Lactobacillus fermentum), this protein is Elongation factor 4.